The chain runs to 91 residues: Acylphosphatase (91 aa).

Residues 4–91 (RAMVTVKGMV…GEFDDFHIAY (88 aa)) enclose the Acylphosphatase-like domain. Active-site residues include R19 and N37.

It belongs to the acylphosphatase family.

The enzyme catalyses an acyl phosphate + H2O = a carboxylate + phosphate + H(+). This is Acylphosphatase (acyP) from Geotalea uraniireducens (strain Rf4) (Geobacter uraniireducens).